The primary structure comprises 65 residues: Protein MalX (65 aa).

The chain is Protein MalX (malX) from Klebsiella pneumoniae.